We begin with the raw amino-acid sequence, 813 residues long: LPS-assembly protein LptD (813 aa).

The N-terminal stretch at 1-22 is a signal peptide; it reads MRRALRLLPLPLSIAICLPAMA.

Belongs to the LptD family. Component of the lipopolysaccharide transport and assembly complex. Interacts with LptE and LptA.

Its subcellular location is the cell outer membrane. Together with LptE, is involved in the assembly of lipopolysaccharide (LPS) at the surface of the outer membrane. In Xanthomonas oryzae pv. oryzae (strain MAFF 311018), this protein is LPS-assembly protein LptD.